The following is a 351-amino-acid chain: CCN family member 3 (351 aa).

The first 21 residues, 1–21, serve as a signal peptide directing secretion; the sequence is MSVFLRKQCLCLGFLLLHLLN. The IGFBP N-terminal domain occupies 25–99; the sequence is ATLRCPSRCP…NNETGICMVP (75 aa). Disulfide bonds link Cys29/Cys55, Cys33/Cys57, Cys37/Cys58, Cys44/Cys61, Cys69/Cys83, and Cys75/Cys96. Residue Asn91 is glycosylated (N-linked (GlcNAc...) asparagine). The VWFC domain occupies 102-168; the sequence is DNCVFDGVIY…GECCEKWTCG (67 aa). One can recognise a TSP type-1 domain in the interval 199 to 244; sequence NCIEQTTEWSACSKSCGMGLSTRVTNRNLQCEMVKQTRLCMVRPCE. A lipid anchor (S-palmitoyl cysteine) is attached at Cys238. Cystine bridges form between Cys258-Cys295, Cys275-Cys309, Cys286-Cys325, Cys289-Cys327, and Cys294-Cys331. The region spanning 258–332 is the CTCK domain; the sequence is CLRTKKSLKS…GTCTCHSNCP (75 aa). N-linked (GlcNAc...) asparagine glycosylation is present at Asn274.

It belongs to the CCN family. As to quaternary structure, interacts with FBLN1. Interacts (via CTCK domain) with NOTCH1 (via the EGF-like repeat region). Interacts with GJA1/CX43. Interacts with ITGA5:ITGB1, ITGAV:ITGB3 and ITGAV:ITGB5. Interacts with ZDHHC22; the interaction may lead to CCN3 palmitoylation. In terms of processing, may be palmitoylated on Cys-238, which is important for extracellular secretion. As to expression, widely expressed. Highly expressed in neurons of dorsal root ganglia and dorsal horn of the spinal cord (at protein level). Expressed in astrocytes (at protein level). In cartilage, dominantly expressed in the chondrocyte territorial matrix.

Its subcellular location is the secreted. The protein localises to the cytoplasm. It localises to the cell junction. The protein resides in the gap junction. Functionally, immediate-early protein playing a role in various cellular processes including proliferation, adhesion, migration, differentiation and survival. Acts by binding to integrins or membrane receptors such as NOTCH1. Essential regulator of hematopoietic stem and progenitor cell function. Inhibits myogenic differentiation through the activation of Notch-signaling pathway. Inhibits vascular smooth muscle cells proliferation by increasing expression of cell-cycle regulators such as CDKN2B or CDKN1A independently of TGFB1 signaling. Ligand of integrins ITGAV:ITGB3 and ITGA5:ITGB1, acts directly upon endothelial cells to stimulate pro-angiogenic activities and induces angiogenesis. In endothelial cells, supports cell adhesion, induces directed cell migration (chemotaxis) and promotes cell survival. Also plays a role in cutaneous wound healing acting as integrin receptor ligand. Supports skin fibroblast adhesion through ITGA5:ITGB1 and ITGA6:ITGB1 and induces fibroblast chemotaxis through ITGAV:ITGB5. Seems to enhance bFGF-induced DNA synthesis in fibroblasts. Involved in bone regeneration as a negative regulator. Enhances the articular chondrocytic phenotype, whereas it repressed the one representing endochondral ossification. Impairs pancreatic beta-cell function, inhibits beta-cell proliferation and insulin secretion. Plays a role as negative regulator of endothelial pro-inflammatory activation reducing monocyte adhesion, its anti-inflammatory effects occur secondary to the inhibition of NF-kappaB signaling pathway. Contributes to the control and coordination of inflammatory processes in atherosclerosis. Attenuates inflammatory pain through regulation of IL1B- and TNF-induced MMP9, MMP2 and CCL2 expression. Inhibits MMP9 expression through ITGB1 engagement. Brain osteoanabolic hormone. During lactation, maintains the maternal skeleton and viability of offspring. This chain is CCN family member 3 (Ccn3), found in Rattus norvegicus (Rat).